The primary structure comprises 361 residues: POU domain, class 3, transcription factor 4-A (361 aa).

Disordered stretches follow at residues 100–131 (HVNH…GQPI), 150–189 (LTPP…EETP), and 333–361 (EKRM…CNEL). Polar residues predominate over residues 119 to 131 (AHNSSLTSSGQPI). A compositionally biased stretch (basic and acidic residues) spans 165–183 (VLREPNDHVDLGSHHCQDH). A POU-specific domain is found at 186–260 (EETPTSDELE…LLNKWLEEAD (75 aa)). The segment at residues 278–337 (KRKKRTSIEVSVKGVLETHFLKCPKPAALEITSLADSLQLEKEVVRVWFCNRRQKEKRMT) is a DNA-binding region (homeobox).

The protein belongs to the POU transcription factor family. Class-3 subfamily. In terms of tissue distribution, from embryonic stage 10, expressed in the Spemann's organizer. During gastrulation, expressed in both the involuting mesoderm and the overlying neuroectoderm. During the neural plate and neural fold stages, expressed in the entire neuroectoderm with expression in discrete regions of the developing nervous system persisting at later stages. Transiently expressed in the pronephros from stages 24-32. In adults, expressed in the kidney and brain.

The protein resides in the nucleus. Its function is as follows. Transcriptional activator. Induces neural-specific gene expression to act as a key regulator of neural differentiation. The protein is POU domain, class 3, transcription factor 4-A (pou3f4-a) of Xenopus laevis (African clawed frog).